A 70-amino-acid polypeptide reads, in one-letter code: Bowman-Birk type proteinase inhibitor A7 (70 aa).

Disulfide bonds link Cys12-Cys31, Cys18-Cys29, Cys38-Cys45, and Cys42-Cys59.

The protein belongs to the Bowman-Birk serine protease inhibitor family. As to expression, expressed in bulb (at protein level).

Serine protease inhibitor. Strongly inhibits trypsin (Ki = 7.1 nM) and almost completely inhibits elastase. Also inhibits chymotrypsin (Ki = 19 nM). Does not inhibit bacterial subtilisin. This is Bowman-Birk type proteinase inhibitor A7 from Hyacinthus orientalis (Common hyacinth).